A 568-amino-acid polypeptide reads, in one-letter code: Phosphoprotein (568 aa).

Disordered regions lie at residues 1 to 23 (MDQD…GGRE) and 38 to 320 (SEPT…GIGE). The span at 7-20 (ILKEDSEVEREAPG) shows a compositional bias: basic and acidic residues. The segment at 33–41 (DAVLSSEPT) is N0 binding. Over residues 50-59 (LHNTINTPQG) the composition is skewed to polar residues. Residue serine 68 is modified to Phosphoserine; by host. The span at 83 to 101 (RSGEESRVSGRTSKPEAEA) shows a compositional bias: basic and acidic residues. Serine 125 bears the Phosphoserine; by host mark. A compositionally biased stretch (basic and acidic residues) spans 150–168 (GIEDENREMAAHPDKRGED). Residues 191–206 (ASNNGRSMEPGSSHSA) are compositionally biased toward polar residues. 4 positions are modified to phosphoserine; by host: serine 192, serine 249, serine 257, and serine 260. 2 multimerization regions span residues 344-411 (FESS…KRFS) and 362-432 (ANYA…HIIT). The segment at 345-412 (ESSRDASYVF…FRDIYKRFSE (68 aa)) is bipartite nucleocapsid binding domain 1. The stretch at 364-429 (YAEMTFNVCG…LLMSNLSTLH (66 aa)) forms a coiled coil. L protein binding regions lie at residues 412–445 (EYQK…DSLT) and 413–445 (YQKE…DSLT). A phosphoserine; by host mark is found at serine 447 and serine 449. Positions 479 to 568 (DLIREDEFRD…VEEDIESLTN (90 aa)) are bipartite nucleocapsid binding domain 2. The interval 479-568 (DLIREDEFRD…VEEDIESLTN (90 aa)) is interaction with the nucleocapsid (N-RNA). The segment at 495-516 (YQERDTEPRASNASRLLPSKEK) is disordered. A formation of N-RNA complex involved in transcription and replication region spans residues 547–566 (KTDQEVKAVMELVEEDIESL).

Belongs to the respirovirus P protein family. Homotetramer. Interacts (via multimerization domain) with polymerase L; this interaction forms the polymerase complex. Interacts (via N-terminus) with N0; this interaction allows P to chaperon N0 before encapsidation and form the N-P complex. Interacts (via C-terminus) with N-RNA template; this interaction positions the polymerase on the template. In terms of processing, phosphorylated by PKC/PRKCZ, and other unknown kinases. Phosphorylation is necessary for viral transcription and replication. The N-terminus contains the majority of phosphorylated sites. Ser-249 is the major site of phosphorylation, but is not necessary for most functions.

The protein localises to the host cytoplasm. Functionally, essential cofactor of the RNA polymerase L that plays a central role in the transcription and replication by forming the polymerase complex with RNA polymerase L and recruiting L to the genomic N-RNA template for RNA synthesis. Also plays a central role in the encapsidation of nascent RNA chains by forming the encapsidation complex with the nucleocapsid protein N (N-P complex). Acts as a chaperone for newly synthesized free N protein, so-called N0, allowing encapsidation of nascent RNA chains during replication. The nucleoprotein protein N prevents excessive phosphorylation of P, which leads to down-regulation of viral transcription/ replication. Participates, together with N, in the formation of viral factories (viroplasms), which are large inclusions in the host cytoplasm where replication takes place. Recruits host PI4KB and remodel the host endoplasmic reticulum membrane to form viral replication factories. The sequence is that of Phosphoprotein (P/V/C) from Sendai virus (strain Fushimi) (SeV).